Reading from the N-terminus, the 913-residue chain is WD repeat-containing protein 44 (913 aa).

Residues 1-14 (MASESDTEEFYDAP) show a composition bias toward acidic residues. The segment at 1–24 (MASESDTEEFYDAPEDVHLGGGYP) is disordered. A2 carries the post-translational modification N-acetylalanine. Residues 2 to 170 (ASESDTEEFY…SSTEQLNVLE (169 aa)) form a binding activity region. A Phosphoserine modification is found at S3. The FFAT-like motif motif lies at 9 to 15 (EFYDAPE). Y11 is modified (phosphotyrosine). A phosphoserine mark is found at S27, S50, S66, S71, S81, S96, and S126. The stretch at 119 to 184 (EESQKAESQN…VLNKEAVEVK (66 aa)) forms a coiled coil. Phosphothreonine is present on residues T158 and T219. The interval 205–348 (AVEEVAPAKP…RPRSNSGREL (144 aa)) is disordered. The tract at residues 211–257 (PAKPPRHLTPEPDIVASTKKPVPARPPPPTNFPPPRPPPPSRPAPPP) is important for interaction with ARHGAP26 AND ARHGAP10. The segment covering 233-256 (PARPPPPTNFPPPRPPPPSRPAPP) has biased composition (pro residues). S262 bears the Phosphoserine mark. Residues 262-278 (SELEFETLKTPDIDVPK) are compositionally biased toward basic and acidic residues. T271 is subject to Phosphothreonine. Over residues 280 to 311 (NITSDSLLTASMASESTVKDSQPSLDLASATS) the composition is skewed to polar residues. The interval 334–347 (VMGPQRPRSNSGRE) is important for interaction with RAB11A. Phosphoserine; by PKB/AKT1 occurs at positions 342 and 344. T349 is modified (phosphothreonine). 2 disordered regions span residues 397–424 (SNDA…LKQK) and 459–480 (DEVF…MPYT). A phosphoserine mark is found at S403, S470, S471, and S472. A compositionally biased stretch (acidic residues) spans 467–476 (DDPSSSDDEG). Phosphotyrosine is present on Y479. A WD 1 repeat occupies 509 to 548 (EHMGAVWTMKFSHCGRLLASAGQDNVVRIWALKNAFDYFN). The segment at 557–593 (EGRVSPSPSQESLSSSKSDTDTGVCSGTDEDPDDKNA) is disordered. S561 and S565 each carry phosphoserine. Residues 561 to 573 (SPSPSQESLSSSK) show a composition bias toward low complexity. WD repeat units lie at residues 605–643 (GHTA…CLCC), 645–685 (QHID…VALW), 690–729 (GQTK…YHTQ), 740–779 (KVGR…LSMK), 784–823 (VNSS…SKFT), and 876–913 (VLDA…KNVS).

Interacts with the GTP-bound form of RAB11A and RAB11B. Interacts with GRAF1/ARHGAP26 or GRAF2/ARHGAP10; the interaction connects the endoplasmic reticulum (ER) with the endosomal tubule. Interacts (via FFAT-like motif) with VAPA (via MSP domain) or VAPB (via MSP domain); the interaction connects the ER with the endosomal tubule. Does not bind to RAB7, RAB10, RAB14, RAB35 and RAB8A. Phosphorylated by ATK1; the phosphorylation stabilizes its interaction with RAB11A and RAB11B.

It localises to the cytoplasm. Its subcellular location is the cytosol. The protein localises to the perinuclear region. The protein resides in the endosome membrane. It is found in the golgi apparatus. It localises to the trans-Golgi network. Downstream effector for Rab11 which regulates Rab11 intracellular membrane trafficking functions such as endocytic recycling, intracellular ciliogenesis and protein export. ATK1-mediated phosphorylation of WDR44 induces binding to Rab11 which activates endocytic recycling of transferrin receptor back to the plasma membrane. When bound to Rab11, prevents the formation of the ciliogenic Rab11-Rabin8/RAB3IP-RAB11FIP3 complex, therefore inhibiting preciliary trafficking and ciliogenesis. Participates in neo-synthesized protein export by connecting the endoplasmic reticulum (ER) with the endosomal tubule via direct interactions with the integral ER proteins VAPA or VAPB and the endosomal protein GRAFs (GRAF1/ARHGAP26 or GRAF2/ARHGAP10), which facilitates the transfer of proteins such as E-cadherin, MPP14 and CFTR into a Rab8-Rab10-Rab11-dependent export route. The polypeptide is WD repeat-containing protein 44 (Homo sapiens (Human)).